A 590-amino-acid chain; its full sequence is Aspartate--tRNA(Asp/Asn) ligase (590 aa).

Residue Glu-176 coordinates L-aspartate. The aspartate stretch occupies residues 200 to 203 (QLFK). Positions 222 and 451 each coordinate L-aspartate. 222 to 224 (RDE) serves as a coordination point for ATP. An ATP-binding site is contributed by Glu-485. Arg-492 is an L-aspartate binding site. 537-540 (GIDR) provides a ligand contact to ATP.

Belongs to the class-II aminoacyl-tRNA synthetase family. Type 1 subfamily. Homodimer.

It is found in the cytoplasm. The catalysed reaction is tRNA(Asx) + L-aspartate + ATP = L-aspartyl-tRNA(Asx) + AMP + diphosphate. Functionally, aspartyl-tRNA synthetase with relaxed tRNA specificity since it is able to aspartylate not only its cognate tRNA(Asp) but also tRNA(Asn). Reaction proceeds in two steps: L-aspartate is first activated by ATP to form Asp-AMP and then transferred to the acceptor end of tRNA(Asp/Asn). The protein is Aspartate--tRNA(Asp/Asn) ligase of Ehrlichia ruminantium (strain Gardel).